The sequence spans 237 residues: MKRIRDVLSHENSNNTNYSDTNDTDYNDSHKLEKQYYEIDYEKFLLDSDIQEKYTKHIEYMLNKLLNKYKNKFVKKIIYDNLITNIINDFSDIIIDLSNQLDYVKQLTNKDFANKQIIDNMLIFLVKYEKILHSALARFVDIYFMRRLLDKKYVTNAVVYTGAYHSVTYIYLLSKIGFQMTHIVKSMVQSVAVANIVLNDIDDVSYRRNIYNLMYFFENNPFSQQCIDVSKFPKSFL.

Residues 1 to 26 are disordered; the sequence is MKRIRDVLSHENSNNTNYSDTNDTDY. Low complexity predominate over residues 12 to 21; the sequence is NSNNTNYSDT.

It belongs to the mimivirus R160 family.

This is an uncharacterized protein from Acanthamoeba polyphaga mimivirus (APMV).